The chain runs to 257 residues: Imidazole glycerol phosphate synthase subunit HisF (257 aa).

Active-site residues include aspartate 11 and aspartate 130.

The protein belongs to the HisA/HisF family. Heterodimer of HisH and HisF.

The protein resides in the cytoplasm. The catalysed reaction is 5-[(5-phospho-1-deoxy-D-ribulos-1-ylimino)methylamino]-1-(5-phospho-beta-D-ribosyl)imidazole-4-carboxamide + L-glutamine = D-erythro-1-(imidazol-4-yl)glycerol 3-phosphate + 5-amino-1-(5-phospho-beta-D-ribosyl)imidazole-4-carboxamide + L-glutamate + H(+). The protein operates within amino-acid biosynthesis; L-histidine biosynthesis; L-histidine from 5-phospho-alpha-D-ribose 1-diphosphate: step 5/9. In terms of biological role, IGPS catalyzes the conversion of PRFAR and glutamine to IGP, AICAR and glutamate. The HisF subunit catalyzes the cyclization activity that produces IGP and AICAR from PRFAR using the ammonia provided by the HisH subunit. In Psychromonas ingrahamii (strain DSM 17664 / CCUG 51855 / 37), this protein is Imidazole glycerol phosphate synthase subunit HisF.